The sequence spans 219 residues: UPF0502 protein HCH_06091 (219 aa).

This sequence belongs to the UPF0502 family.

This Hahella chejuensis (strain KCTC 2396) protein is UPF0502 protein HCH_06091.